A 197-amino-acid polypeptide reads, in one-letter code: NADH-quinone oxidoreductase subunit C (197 aa).

This sequence belongs to the complex I 30 kDa subunit family. NDH-1 is composed of 14 different subunits. Subunits NuoB, C, D, E, F, and G constitute the peripheral sector of the complex.

The protein resides in the cell inner membrane. It carries out the reaction a quinone + NADH + 5 H(+)(in) = a quinol + NAD(+) + 4 H(+)(out). Its function is as follows. NDH-1 shuttles electrons from NADH, via FMN and iron-sulfur (Fe-S) centers, to quinones in the respiratory chain. The immediate electron acceptor for the enzyme in this species is believed to be ubiquinone. Couples the redox reaction to proton translocation (for every two electrons transferred, four hydrogen ions are translocated across the cytoplasmic membrane), and thus conserves the redox energy in a proton gradient. This is NADH-quinone oxidoreductase subunit C from Rickettsia prowazekii (strain Madrid E).